The sequence spans 783 residues: Centrosomal protein of 89 kDa (783 aa).

The interval 28-49 (PKAAVPRTPPPRSPNPSPERPR) is disordered. Residues 34-45 (RTPPPRSPNPSP) are compositionally biased toward pro residues. Serine 50 bears the Phosphoserine mark. Disordered regions lie at residues 63-157 (GRTV…DDLY) and 176-226 (DENI…DITG). The segment covering 94–107 (ATTSQLRPRPNWQS) has biased composition (polar residues). Composition is skewed to basic and acidic residues over residues 139–155 (ELGDVSAREDRGGHSDD) and 196–214 (QQKDGKHPVLNLKDEKPPL). Coiled-coil stretches lie at residues 234-333 (EITR…SRYQ) and 369-719 (LLLA…GELE).

It localises to the cytoplasm. The protein localises to the cytosol. The protein resides in the cytoskeleton. Its subcellular location is the microtubule organizing center. It is found in the centrosome. It localises to the spindle pole. The protein localises to the centriole. The protein resides in the mitochondrion intermembrane space. Its function is as follows. Required for ciliogenesis. Also plays a role in mitochondrial metabolism where it may modulate complex IV activity. The polypeptide is Centrosomal protein of 89 kDa (CEP89) (Homo sapiens (Human)).